The chain runs to 475 residues: Ataxin-10 (475 aa).

An Omega-N-methylarginine modification is found at Arg-10. Residues Ser-12 and Ser-77 each carry the phosphoserine modification. Residue Thr-82 is modified to Phosphothreonine. Phosphoserine is present on Ser-430.

Belongs to the ataxin-10 family. As to quaternary structure, homooligomer. Interacts with GNB2. Interacts with IQCB1. Interacts with OGT. Post-translationally, polyubiquitinated. In terms of processing, phosphorylation at Ser-12 by AURKB promotes the association of ATXN10 with PLK1. Phosphorylation at Ser-77 and Thr-82 by PLK1 may play a role in the regulation of cytokinesis and may stimulate the proteasome-mediated degradation of ATXN10.

The protein localises to the cytoplasm. The protein resides in the perinuclear region. It localises to the midbody. Its subcellular location is the cytoskeleton. It is found in the cilium basal body. The protein localises to the microtubule organizing center. The protein resides in the centrosome. It localises to the centriole. In terms of biological role, may play a role in the regulation of cytokinesis. May play a role in signaling by stimulating protein glycosylation. Induces neuritogenesis by activating the Ras-MAP kinase pathway and is necessary for the survival of cerebellar neurons. Does not appear to play a major role in ciliogenesis. This chain is Ataxin-10 (ATXN10), found in Macaca fascicularis (Crab-eating macaque).